Reading from the N-terminus, the 865-residue chain is Xylosyltransferase 2 (865 aa).

At 1–15 the chain is on the cytoplasmic side; the sequence is MVASARVQKLVRRYK. The chain crosses the membrane as a helical; Signal-anchor for type II membrane protein span at residues 16–36; the sequence is LAIATALAILLLQGLVVWSFS. Topologically, residues 37–865 are lumenal; the sequence is GLEEDEAGEK…GPVKADGRLR (829 aa). The tract at residues 41 to 157 is disordered; it reads DEAGEKGRQR…EGAPQPTDNG (117 aa). Residues 53–65 are compositionally biased toward basic and acidic residues; sequence RPLDPGEGSKDTD. Residues 73 to 82 are compositionally biased toward basic residues; that stretch reads STGRRHGRWR. Asparagine 122 is a glycosylation site (N-linked (GlcNAc...) asparagine). Positions 125–137 are enriched in low complexity; sequence GAAAGEALVGAAG. Cystine bridges form between cysteine 162–cysteine 190, cysteine 206–cysteine 448, cysteine 467–cysteine 480, and cysteine 469–cysteine 478. Residues valine 239, aspartate 267, and 296–298 each bind UDP-alpha-D-xylose; that span reads TIW. Asparagine 327 is a glycosylation site (N-linked (GlcNAc...) asparagine). 400 to 401 is a binding site for UDP-alpha-D-xylose; sequence DW. Residues serine 481 and 504–505 each bind UDP-alpha-D-xylose; that span reads RK. 2 disulfides stabilise this stretch: cysteine 581–cysteine 833 and cysteine 826–cysteine 839. Residue asparagine 683 is glycosylated (N-linked (GlcNAc...) asparagine). The segment at 846-865 is disordered; it reads SLSPDPKSELGPVKADGRLR.

It belongs to the glycosyltransferase 14 family. XylT subfamily. As to quaternary structure, monomer. Mg(2+) is required as a cofactor. It depends on Mn(2+) as a cofactor. Post-translationally, contains disulfide bonds.

The protein resides in the golgi apparatus membrane. It localises to the secreted. The enzyme catalyses UDP-alpha-D-xylose + L-seryl-[protein] = 3-O-(beta-D-xylosyl)-L-seryl-[protein] + UDP + H(+). It participates in glycan metabolism; chondroitin sulfate biosynthesis. The protein operates within glycan metabolism; heparan sulfate biosynthesis. Its function is as follows. Catalyzes the first step in the biosynthesis of chondroitin sulfate, heparan sulfate and dermatan sulfate proteoglycans, such as DCN. Transfers D-xylose from UDP-D-xylose to specific serine residues of the core protein. This Pan troglodytes (Chimpanzee) protein is Xylosyltransferase 2 (XYLT2).